The chain runs to 313 residues: MVHFHPFGNVNFYEMDWSLKGDLWAHDPVIAKEGSRWYVFHTGSGIQIKTSEDGVHWENMGRVFPSLPDWCKQYVPEKDEDHLWAPDICFYNGIYYLYYSVSTFGKNTSVIGLATNRTLDPRDPDYEWKDMGPVIHSTASDNYNAIDPNVVFDQEGQPWLSFGSFWSGIQLIQLDTETMKPAAQAELLTIASRGEEPNAIEAPFIVCRNGYYYLFVSFDFCCRGIESTYKIAVGRSKDITGPYVDKNGVSMMQGGGTILDAGNDRWIGPGHCAVYFSGVSAILVNHAYDALKNGEPTLQIRPLYWDDEGWPYL.

D27 functions as the Proton acceptor in the catalytic mechanism. Substrate contacts are provided by residues D27, G105, 144–147, and 164–166; these read NAID and SFW. E201 functions as the Proton donor in the catalytic mechanism. H271 lines the Ca(2+) pocket.

This sequence belongs to the glycosyl hydrolase 43 family. In terms of assembly, monomer. Requires Ca(2+) as cofactor.

The protein resides in the cytoplasm. It carries out the reaction Endohydrolysis of (1-&gt;5)-alpha-arabinofuranosidic linkages in (1-&gt;5)-arabinans.. It functions in the pathway glycan metabolism; L-arabinan degradation. Its function is as follows. Involved in the degradation of arabinan and is a key enzyme in the complete degradation of the plant cell wall. Catalyzes the cleavage of endo alpha-(1-&gt;5)-L-arabinofuranosyl residues in debranched arabinan. The polypeptide is Intracellular endo-alpha-(1-&gt;5)-L-arabinanase (abn-ts) (Geobacillus thermodenitrificans).